A 663-amino-acid chain; its full sequence is Protein THEMIS2 (663 aa).

CABIT stretches follow at residues 2-237 (EPVP…TASS) and 238-515 (QHIH…EAEG). A disordered region spans residues 545 to 663 (ASESQAPPPR…DMDDHDYEEI (119 aa)). Polar residues predominate over residues 559 to 577 (QGINKKQQNIQSCKESSVK). Threonine 596 carries the phosphothreonine modification. The span at 621-641 (NPQTQNSVLSMKPKTSSSLGK) shows a compositional bias: polar residues. A compositionally biased stretch (acidic residues) spans 653–663 (PDMDDHDYEEI). At tyrosine 660 the chain carries Phosphotyrosine.

This sequence belongs to the themis family. As to quaternary structure, interacts with VAV1. Interacts with LAT. Interacts constitutively with GRB2, LYN and PLCG2; these interactions increase the activation of PLCG2 and its downstream pathways following B cell receptor stimulation. Post-translationally, phosphorylation at Tyr-660 is induced by LPS. Phosphorylated by Src kinases (Lck or Fyn) following BCR engagement. Expressed in both developing and mature B-cells with high expression in immature, follicular and B1 B cells. Also expressed in macrophages and dendritic cells. Down-regulated in splenocytes of mice developing arthritis in a collagen-induced model, not in those of mice failing to develop the disease. Transiently down-regulated in splenocytes of mice infected with influenza virus.

It localises to the nucleus. It is found in the cytoplasm. In terms of biological role, may constitute a control point in macrophage inflammatory response, promoting LPS-induced TLR4-mediated TNF production. Determines the threshold for activation of B cells by low-affinity and low-avidity ligands via PLCG2 activation and its downstream pathways. This is Protein THEMIS2 from Mus musculus (Mouse).